Consider the following 320-residue polypeptide: Serpentine receptor class delta-28 (320 aa).

Helical transmembrane passes span 5–25 (LLHTVLSVVGVSLNAFMMYLA), 38–58 (AIITIKTFTDILTSAMSFFVM), 83–103 (ACYIGHMFMLCFLECNLIWMI), 122–142 (SLVFVAICLSIPSFIHMATWI), 176–196 (LTLIIQLFITSILVLIAYAWI), 230–250 (FLPSFIFLGVFVFVGMFTQLI), and 258–278 (LVSVIFMFSPICSPFSYILFV).

Belongs to the nematode receptor-like protein srd family.

Its subcellular location is the membrane. The polypeptide is Serpentine receptor class delta-28 (srd-28) (Caenorhabditis elegans).